Reading from the N-terminus, the 257-residue chain is Pyridoxine/pyridoxamine 5'-phosphate oxidase (257 aa).

A substrate-binding site is contributed by 33–36 (RIKY). 90-93 (RFVL) lines the FMN pocket. Residue Lys-95 participates in pyridoxal 5'-phosphate binding. Residues 105 to 106 (YT) and Lys-112 contribute to the FMN site. Residues Tyr-152, Arg-156, and Ser-160 each contribute to the pyridoxal 5'-phosphate site. Residues 169 to 170 (QS) and Trp-216 each bind FMN. 222–224 (RLH) is a substrate binding site. Arg-226 lines the FMN pocket.

It belongs to the pyridoxamine 5'-phosphate oxidase family. In terms of assembly, homodimer. The cofactor is FMN. As to expression, expressed in silk gland and fat body of the larva.

It catalyses the reaction pyridoxamine 5'-phosphate + O2 + H2O = pyridoxal 5'-phosphate + H2O2 + NH4(+). It carries out the reaction pyridoxine 5'-phosphate + O2 = pyridoxal 5'-phosphate + H2O2. Its pathway is cofactor metabolism; pyridoxal 5'-phosphate salvage; pyridoxal 5'-phosphate from pyridoxamine 5'-phosphate: step 1/1. It functions in the pathway cofactor metabolism; pyridoxal 5'-phosphate salvage; pyridoxal 5'-phosphate from pyridoxine 5'-phosphate: step 1/1. Catalyzes the oxidation of either pyridoxine 5'-phosphate (PNP) or pyridoxamine 5'-phosphate (PMP) into pyridoxal 5'-phosphate (PLP). In Bombyx mori (Silk moth), this protein is Pyridoxine/pyridoxamine 5'-phosphate oxidase.